The sequence spans 572 residues: Methionine--tRNA ligase (572 aa).

The 'HIGH' region signature appears at 11-21 (PYINGIKHLGN). C143, C146, C156, and C159 together coordinate Zn(2+). Positions 346 to 350 (QFSTS) match the 'KMSKS' region motif. T349 contacts ATP.

It belongs to the class-I aminoacyl-tRNA synthetase family. MetG type 1 subfamily. Monomer. Zn(2+) is required as a cofactor.

Its subcellular location is the cytoplasm. The catalysed reaction is tRNA(Met) + L-methionine + ATP = L-methionyl-tRNA(Met) + AMP + diphosphate. Functionally, is required not only for elongation of protein synthesis but also for the initiation of all mRNA translation through initiator tRNA(fMet) aminoacylation. This chain is Methionine--tRNA ligase, found in Roseobacter denitrificans (strain ATCC 33942 / OCh 114) (Erythrobacter sp. (strain OCh 114)).